The primary structure comprises 195 residues: ATP-dependent Clp protease proteolytic subunit (195 aa).

Ser-98 functions as the Nucleophile in the catalytic mechanism. The active site involves His-123.

Belongs to the peptidase S14 family. Fourteen ClpP subunits assemble into 2 heptameric rings which stack back to back to give a disk-like structure with a central cavity, resembling the structure of eukaryotic proteasomes.

The protein resides in the cytoplasm. The enzyme catalyses Hydrolysis of proteins to small peptides in the presence of ATP and magnesium. alpha-casein is the usual test substrate. In the absence of ATP, only oligopeptides shorter than five residues are hydrolyzed (such as succinyl-Leu-Tyr-|-NHMec, and Leu-Tyr-Leu-|-Tyr-Trp, in which cleavage of the -Tyr-|-Leu- and -Tyr-|-Trp bonds also occurs).. Cleaves peptides in various proteins in a process that requires ATP hydrolysis. Has a chymotrypsin-like activity. Plays a major role in the degradation of misfolded proteins. The polypeptide is ATP-dependent Clp protease proteolytic subunit (Thermodesulfovibrio yellowstonii (strain ATCC 51303 / DSM 11347 / YP87)).